Reading from the N-terminus, the 85-residue chain is BmK AGP-SYPU2 (85 aa).

Residues 1–19 form the signal peptide; it reads MNYMVIISLALLVMTGVES. Positions 21–83 constitute an LCN-type CS-alpha/beta domain; the sequence is KDGYIADDRN…ARIMKPGRCN (63 aa). 4 disulfides stabilise this stretch: cysteine 31–cysteine 82, cysteine 35–cysteine 55, cysteine 41–cysteine 65, and cysteine 45–cysteine 67.

The protein belongs to the long (4 C-C) scorpion toxin superfamily. Sodium channel inhibitor family. Alpha subfamily. Expressed by the venom gland.

Its subcellular location is the secreted. In terms of biological role, alpha toxins bind voltage-independently at site-3 of sodium channels (Nav) and inhibit the inactivation of the activated channels, thereby blocking neuronal transmission. Shows analgesic activity when intraperitoneally injected into mice. The chain is BmK AGP-SYPU2 from Olivierus martensii (Manchurian scorpion).